Consider the following 42-residue polypeptide: Potassium channel toxin gamma-KTx 1.8 (42 aa).

Cystine bridges form between cysteine 5–cysteine 23, cysteine 11–cysteine 34, cysteine 20–cysteine 39, and cysteine 24–cysteine 41.

Belongs to the ergtoxin family. Gamma-KTx 1 subfamily. As to expression, expressed by the venom gland.

It is found in the secreted. Functionally, blocks in a reversible manner human and rat Kv11.1/KCNH2/ERG1 potassium channels. Also completely and irreversibly blocks rat Kv11.2/KCNH6/ERG2 and human Kv11.3/KCNH7/ERG3 channels. Also weakly inhibits Kir2.1/KCNJ2 and Kv1.2/KCNA2 potassium channels. The sequence is that of Potassium channel toxin gamma-KTx 1.8 from Centruroides elegans (Bark scorpion).